Here is a 445-residue protein sequence, read N- to C-terminus: Putrescine hydroxycinnamoyltransferase 1 (445 aa).

Active-site proton acceptor residues include histidine 154 and aspartate 388.

This sequence belongs to the plant acyltransferase family. Expressed in leaves.

Its function is as follows. Hydroxycinnamoyl transferase that catalyzes the transfer of an acyl from p-coumaryol-CoA to putrescine, to produce coumaroyl putrescine. The sequence is that of Putrescine hydroxycinnamoyltransferase 1 from Oryza sativa subsp. japonica (Rice).